The primary structure comprises 299 residues: tRNA dimethylallyltransferase (299 aa).

11–18 (GPTAVGKT) is a binding site for ATP. Residue 13–18 (TAVGKT) coordinates substrate. The tract at residues 36–39 (DSQQ) is interaction with substrate tRNA.

This sequence belongs to the IPP transferase family. In terms of assembly, monomer. Requires Mg(2+) as cofactor.

The catalysed reaction is adenosine(37) in tRNA + dimethylallyl diphosphate = N(6)-dimethylallyladenosine(37) in tRNA + diphosphate. Its function is as follows. Catalyzes the transfer of a dimethylallyl group onto the adenine at position 37 in tRNAs that read codons beginning with uridine, leading to the formation of N6-(dimethylallyl)adenosine (i(6)A). This chain is tRNA dimethylallyltransferase, found in Streptococcus pyogenes serotype M4 (strain MGAS10750).